A 358-amino-acid chain; its full sequence is Trace amine-associated receptor 7b (358 aa).

Residues 1–47 lie on the Extracellular side of the membrane; sequence MATDNDSFPWDQDSILSSDMFSATSTELCYENLNRSCVRSPYSPGPR. Asn5 and Asn34 each carry an N-linked (GlcNAc...) asparagine glycan. Cystine bridges form between Cys37–Cys201 and Cys120–Cys205. Residues 48–68 form a helical membrane-spanning segment; it reads LILYAVFGFGAALAVCGNLLV. At 69–83 the chain is on the cytoplasmic side; the sequence is MTSILHFRQLHSPAN. A helical transmembrane segment spans residues 84-104; that stretch reads FLVVSLACADFLVGLTVMPFS. Over 105 to 121 the chain is Extracellular; it reads TVRSVEGCWYFGESYCK. Residues 122 to 143 form a helical membrane-spanning segment; the sequence is LHTCFDVSFCYCSIFHLCFISV. Residues 144–166 lie on the Cytoplasmic side of the membrane; that stretch reads DRYIAVSDPLTYPTRFTAFVSGK. A helical transmembrane segment spans residues 167 to 187; that stretch reads CITFSWLLSTIYGFSLLYTGA. At 188–212 the chain is on the extracellular side; sequence NEAGLEDLVSALTCVGGCQLAVNQS. An N-linked (GlcNAc...) asparagine glycan is attached at Asn210. A helical membrane pass occupies residues 213–233; that stretch reads WVFINFLLFLIPTLVMITVYS. At 234–274 the chain is on the cytoplasmic side; it reads KIFLIAKQQAQNIEKMSKQTARASDSYKDRVAKRERKAAKT. A helical membrane pass occupies residues 275–295; it reads LGIAVAAFLLSWLPYFIDSII. At 296–309 the chain is on the extracellular side; it reads DAFLGFITPTYVYE. The chain crosses the membrane as a helical span at residues 310-333; sequence ILVWIAYYNSAMNPLIYAFFYPWF. Residues 334-358 lie on the Cytoplasmic side of the membrane; it reads RKAIKLIVSGKVLRENSSTTNLFPE.

This sequence belongs to the G-protein coupled receptor 1 family. As to expression, specifically expressed in neurons of the olfactory epithelium.

Its subcellular location is the cell membrane. Olfactory receptor specific for N,N-dimethylalkylamines trace amines, such as N,N-dimethylcyclohexylamine. Trace amine compounds are enriched in animal body fluids and act on trace amine-associated receptors (TAARs) to elicit both intraspecific and interspecific innate behaviors. Ligand-binding causes a conformation change that triggers signaling via G(s)-class of G alpha proteins (GNAL or GNAS). The protein is Trace amine-associated receptor 7b of Mus musculus (Mouse).